A 492-amino-acid polypeptide reads, in one-letter code: NADH-quinone oxidoreductase subunit N (492 aa).

Transmembrane regions (helical) follow at residues 12–32 (LLPY…MIAI), 44–64 (ISVV…AGII), 76–96 (LFVI…CALA), 115–135 (LYLL…AQHL), 138–158 (FFMS…YTYM), 169–189 (YLVL…FIYA), 212–232 (LILG…AAPF), 244–264 (PAPI…ALAV), 272–292 (LLAL…SILL), 306–326 (LLGY…VSIG), 334–354 (SMYM…VTLM), 381–401 (TAVM…AGFI), 416–438 (WFLA…RVLL), and 463–483 (IMVI…NSMI).

The protein belongs to the complex I subunit 2 family. NDH-1 is composed of 14 different subunits. Subunits NuoA, H, J, K, L, M, N constitute the membrane sector of the complex.

Its subcellular location is the cell inner membrane. The enzyme catalyses a quinone + NADH + 5 H(+)(in) = a quinol + NAD(+) + 4 H(+)(out). In terms of biological role, NDH-1 shuttles electrons from NADH, via FMN and iron-sulfur (Fe-S) centers, to quinones in the respiratory chain. The immediate electron acceptor for the enzyme in this species is believed to be ubiquinone. Couples the redox reaction to proton translocation (for every two electrons transferred, four hydrogen ions are translocated across the cytoplasmic membrane), and thus conserves the redox energy in a proton gradient. This chain is NADH-quinone oxidoreductase subunit N, found in Psychrobacter arcticus (strain DSM 17307 / VKM B-2377 / 273-4).